A 347-amino-acid chain; its full sequence is NADH-ubiquinone oxidoreductase chain 2 (347 aa).

11 helical membrane-spanning segments follow: residues 3-23 (PLIFTMIMLTVILGTTIVMMS), 25-45 (HWLMIWMGFEMNMLAVIPLLM), 59-79 (YFLTQATASMLLMLAVIINLL), 96-116 (IIMTLALGMKMGLAPFHFWVP), 122-144 (ISLSSGLILLTWQKLAPLSVLYV), 149-171 (INLDLILLMSMMSIAIGGWGGLN), 178-198 (ILAYSSIAHMGWMASILVFNP), 202-222 (LLNLLLYILMTTTTFMLFMVA), 247-267 (IMLSLGGLPPLTGFLPKWMII), 276-296 (ITLATLMAITALLNLFFYMRL), and 326-346 (LPVLIILSTITLPLAPAITLL).

The protein belongs to the complex I subunit 2 family. Core subunit of respiratory chain NADH dehydrogenase (Complex I) which is composed of 45 different subunits. Interacts with TMEM242.

The protein resides in the mitochondrion inner membrane. The enzyme catalyses a ubiquinone + NADH + 5 H(+)(in) = a ubiquinol + NAD(+) + 4 H(+)(out). Functionally, core subunit of the mitochondrial membrane respiratory chain NADH dehydrogenase (Complex I) which catalyzes electron transfer from NADH through the respiratory chain, using ubiquinone as an electron acceptor. Essential for the catalytic activity and assembly of complex I. The polypeptide is NADH-ubiquinone oxidoreductase chain 2 (Saccopteryx bilineata (Greater white-lined bat)).